We begin with the raw amino-acid sequence, 449 residues long: Glycoprotein endo-alpha-1,2-mannosidase (449 aa).

The Cytoplasmic segment spans residues 1 to 8; the sequence is MIRFRRRT. Residues 9-29 traverse the membrane as a helical; Signal-anchor for type II membrane protein segment; that stretch reads CITLSIFIFLVCLIMAGLKHL. The Lumenal segment spans residues 30-449; it reads RPENAAFGSP…YMKEKEHWLV (420 aa). The segment at 59–449 is catalytic; that stretch reads DSENHLKGNT…YMKEKEHWLV (391 aa).

The protein belongs to the glycosyl hydrolase 99 family.

It localises to the golgi apparatus membrane. The enzyme catalyses N-{alpha-Glc-(1-&gt;3)-alpha-Man-(1-&gt;2)-alpha-Man-(1-&gt;2)-alpha-Man-(1-&gt;3)-[alpha-Man-(1-&gt;2)-alpha-Man-(1-&gt;3)-[alpha-Man-(1-&gt;2)-alpha-Man-(1-&gt;6)]-alpha-Man-(1-&gt;6)]-beta-Man-(1-&gt;4)-beta-GlcNAc-(1-&gt;4)-beta-GlcNAc}-L-asparaginyl-[protein] + H2O = alpha-D-glucosyl-(1-&gt;3)-D-mannopyranose + N(4)-{alpha-D-Man-(1-&gt;2)-alpha-D-Man-(1-&gt;3)-[alpha-D-Man-(1-&gt;2)-alpha-D-Man-(1-&gt;3)-[alpha-D-Man-(1-&gt;2)-alpha-D-Man-(1-&gt;6)]-alpha-D-Man-(1-&gt;6)]-beta-D-Man-(1-&gt;4)-beta-D-GlaNAc-(1-&gt;4)-beta-D-GlcNAc}-L-asparaginyl-[protein] (N-glucan mannose isomer 8A1,2,3B1,2). The chain is Glycoprotein endo-alpha-1,2-mannosidase (manea) from Xenopus laevis (African clawed frog).